A 124-amino-acid polypeptide reads, in one-letter code: Fluoride-specific ion channel FluC (124 aa).

3 helical membrane passes run 36–56 (VGTM…VVVL), 63–83 (YAPF…AFSL), and 99–119 (AYVG…MAAV). Residues G73 and T76 each coordinate Na(+).

This sequence belongs to the fluoride channel Fluc/FEX (TC 1.A.43) family.

It is found in the cell inner membrane. The enzyme catalyses fluoride(in) = fluoride(out). Na(+) is not transported, but it plays an essential structural role and its presence is essential for fluoride channel function. In terms of biological role, fluoride-specific ion channel. Important for reducing fluoride concentration in the cell, thus reducing its toxicity. This Cereibacter sphaeroides (strain ATCC 17029 / ATH 2.4.9) (Rhodobacter sphaeroides) protein is Fluoride-specific ion channel FluC.